A 160-amino-acid chain; its full sequence is Baculoviral IAP repeat-containing protein 5.1-B (160 aa).

The BIR repeat unit spans residues 13 to 83; it reads QRLQDFRNMY…EGWEPDDDPW (71 aa). Thr-43 bears the Phosphothreonine; by CDK1 mark. Residues Cys-66, Cys-69, His-86, and Cys-93 each coordinate Zn(2+).

Belongs to the IAP family. As to quaternary structure, component of the CPC at least composed of survivin/birc5, incenp, cdca8/borealin and/or cdca9/dasra-A, and aurkb/aurora-B. Interacts directly with incenp (via N-terminus), and may weakly interact with aurkb (via N-terminus) to stabilize the complex. Interacts with GTP-bound ran in both the S and M phases of the cell cycle. Also found in a complex with ubiquitin-mediated signaling proteins including at least usp9x/xFAM, nploc4/npl4 and ufd1. In terms of processing, ubiquitination is required for centrosome-targeting.

It is found in the cytoplasm. The protein localises to the nucleus. It localises to the chromosome. The protein resides in the centromere. Its subcellular location is the cytoskeleton. It is found in the spindle. In terms of biological role, component of the chromosomal passenger complex (CPC), a complex that acts as a key regulator of mitosis. The CPC complex has essential functions at the centromere in ensuring correct chromosome alignment and segregation and is required for chromatin-induced microtubule stabilization and spindle assembly. Stimulates the mitotic kinase activity of aurkb/aurora-B in the CPC. Does not appear to exhibit anti-apoptotic activity. CPC. Does not appear to exhibit anti-apoptotic activity. The protein is Baculoviral IAP repeat-containing protein 5.1-B (birc5.1-b) of Xenopus laevis (African clawed frog).